The chain runs to 518 residues: Glutamate--cysteine ligase (518 aa).

It belongs to the glutamate--cysteine ligase type 1 family. Type 1 subfamily.

It carries out the reaction L-cysteine + L-glutamate + ATP = gamma-L-glutamyl-L-cysteine + ADP + phosphate + H(+). It functions in the pathway sulfur metabolism; glutathione biosynthesis; glutathione from L-cysteine and L-glutamate: step 1/2. This chain is Glutamate--cysteine ligase, found in Salmonella gallinarum (strain 287/91 / NCTC 13346).